The chain runs to 612 residues: ETS-related transcription factor Elf-1 (612 aa).

Ser-110, Ser-163, Ser-167, and Ser-168 each carry phosphoserine. The span at 156–169 (VQETNADSPGASSP) shows a compositional bias: polar residues. Residues 156–199 (VQETNADSPGASSPEQRKRKKGRKTKPPRPDSPTTTPNISVKKK) are disordered. A compositionally biased stretch (basic residues) spans 172–182 (RKRKKGRKTKP). Ser-187 carries the phosphoserine modification. Thr-190 carries the phosphothreonine modification. The ETS DNA-binding region spans 208–290 (IYLWEFLLAL…EGQRLVYQFK (83 aa)). A disordered region spans residues 300–361 (DDEDPSSSIE…AANPKDPVEV (62 aa)). Positions 305–322 (SSSIESSDQSLSSTTASS) are enriched in low complexity. Residues 323 to 335 (RNQANRSRVSSSP) show a composition bias toward polar residues. Ser-431 carries the phosphoserine modification. A compositionally biased stretch (basic and acidic residues) spans 562 to 577 (EVEKKAEDDLNEDAEK). Residues 562–586 (EVEKKAEDDLNEDAEKSAQQPQPYV) are disordered.

Belongs to the ETS family. In terms of assembly, binds to the underphosphorylated form of RB. May interact with other transcription factors in order to regulate specific genes. Interacts with RUNX1. Interacts with SP1; the interaction is inhibited by glycosylation of SP1. As to expression, predominantly found in hematopoietic cells. Detected in other cell types such as fibroblasts.

Its subcellular location is the nucleus. In terms of biological role, transcription factor that activates the LYN and BLK promoters. The chain is ETS-related transcription factor Elf-1 (Elf1) from Mus musculus (Mouse).